The sequence spans 182 residues: Isopentenyl-diphosphate Delta-isomerase (182 aa).

Residues His25 and His32 each coordinate Mn(2+). Residue Cys67 is part of the active site. His69 contacts Mn(2+). Glu87 provides a ligand contact to Mg(2+). Mn(2+) contacts are provided by Glu114 and Glu116. Glu116 is a catalytic residue.

This sequence belongs to the IPP isomerase type 1 family. As to quaternary structure, homodimer. The cofactor is Mg(2+). Mn(2+) serves as cofactor.

The protein resides in the cytoplasm. The enzyme catalyses isopentenyl diphosphate = dimethylallyl diphosphate. It functions in the pathway isoprenoid biosynthesis; dimethylallyl diphosphate biosynthesis; dimethylallyl diphosphate from isopentenyl diphosphate: step 1/1. Catalyzes the 1,3-allylic rearrangement of the homoallylic substrate isopentenyl (IPP) to its highly electrophilic allylic isomer, dimethylallyl diphosphate (DMAPP). The polypeptide is Isopentenyl-diphosphate Delta-isomerase (Escherichia coli (strain K12 / MC4100 / BW2952)).